Reading from the N-terminus, the 393-residue chain is MTAPTTRKDLMIVNMGPQHPSMHGVLRLIVTLDGEDVVDCEPILGYLHRGMEKIAENRTIIQYLPYVTRWDYLATMFTEAITINGPEQLGNIQVPKRASYIRVIMLELSRIASHLLWLGPFMADIGAQTPFFYIFRERELIYDLFEAATGMRMMHNFFRIGGVAADLPYGWINKCLDFCDYFLTGVAEYQKLITRNPLFLERVEGVGIIGGDEALNWGLSGPMLRASGIEWDLRKVDHYESYDEFDWQVQWQREGDSLARYLVRISEMTESIKIIQQALEGIPGGPYENLEIRRFDRLKDPEWNAFEYRFISKKPSPTFELSKQELYVRVEAPKGELGIFLIGDQSVFPWRWKIRPPGFINLQILPQLVKRMKLADIMTILGSIDIIMGEVDR.

This sequence belongs to the complex I 49 kDa subunit family. As to quaternary structure, NDH is composed of at least 16 different subunits, 5 of which are encoded in the nucleus.

It localises to the plastid. It is found in the chloroplast thylakoid membrane. The enzyme catalyses a plastoquinone + NADH + (n+1) H(+)(in) = a plastoquinol + NAD(+) + n H(+)(out). It carries out the reaction a plastoquinone + NADPH + (n+1) H(+)(in) = a plastoquinol + NADP(+) + n H(+)(out). NDH shuttles electrons from NAD(P)H:plastoquinone, via FMN and iron-sulfur (Fe-S) centers, to quinones in the photosynthetic chain and possibly in a chloroplast respiratory chain. The immediate electron acceptor for the enzyme in this species is believed to be plastoquinone. Couples the redox reaction to proton translocation, and thus conserves the redox energy in a proton gradient. The sequence is that of NAD(P)H-quinone oxidoreductase subunit H, chloroplastic from Nicotiana tomentosiformis (Tobacco).